The following is an 84-amino-acid chain: Sec-independent protein translocase protein TatA (84 aa).

The chain crosses the membrane as a helical span at residues 4–24 (MSPVHWLILAVVLLVVFGGGG). Residues 46–84 (DDESMTATDATQAPGHISPPNQNPGYSQTTSSETHRNQV) form a disordered region. Polar residues predominate over residues 64-77 (PPNQNPGYSQTTSS).

The protein belongs to the TatA/E family. The Tat system comprises two distinct complexes: a TatABC complex, containing multiple copies of TatA, TatB and TatC subunits, and a separate TatA complex, containing only TatA subunits. Substrates initially bind to the TatABC complex, which probably triggers association of the separate TatA complex to form the active translocon.

It is found in the cell inner membrane. Its function is as follows. Part of the twin-arginine translocation (Tat) system that transports large folded proteins containing a characteristic twin-arginine motif in their signal peptide across membranes. TatA could form the protein-conducting channel of the Tat system. This is Sec-independent protein translocase protein TatA from Gluconobacter oxydans (strain 621H) (Gluconobacter suboxydans).